The sequence spans 407 residues: Elongation factor Tu, chloroplastic (407 aa).

The region spanning Lys10–Glu212 is the tr-type G domain. The G1 stretch occupies residues Gly19 to Thr26. Gly19–Thr26 provides a ligand contact to GTP. Thr26 contributes to the Mg(2+) binding site. The tract at residues Gly59–Asn63 is G2. The tract at residues Asp80–Gly83 is G3. GTP is bound by residues Asp80–His84 and Asn135–Asp138. Residues Asn135–Asp138 form a G4 region. The G5 stretch occupies residues Ser173–Leu175.

Belongs to the TRAFAC class translation factor GTPase superfamily. Classic translation factor GTPase family. EF-Tu/EF-1A subfamily.

It localises to the plastid. The protein resides in the chloroplast. It carries out the reaction GTP + H2O = GDP + phosphate + H(+). In terms of biological role, GTP hydrolase that promotes the GTP-dependent binding of aminoacyl-tRNA to the A-site of ribosomes during protein biosynthesis. The polypeptide is Elongation factor Tu, chloroplastic (tufA) (Emiliania huxleyi (Coccolithophore)).